Reading from the N-terminus, the 127-residue chain is Large ribosomal subunit protein bL12 (127 aa).

The protein belongs to the bacterial ribosomal protein bL12 family. As to quaternary structure, homodimer. Part of the ribosomal stalk of the 50S ribosomal subunit. Forms a multimeric L10(L12)X complex, where L10 forms an elongated spine to which 2 to 4 L12 dimers bind in a sequential fashion. Binds GTP-bound translation factors.

Functionally, forms part of the ribosomal stalk which helps the ribosome interact with GTP-bound translation factors. Is thus essential for accurate translation. In Syntrophotalea carbinolica (strain DSM 2380 / NBRC 103641 / GraBd1) (Pelobacter carbinolicus), this protein is Large ribosomal subunit protein bL12.